Here is a 203-residue protein sequence, read N- to C-terminus: High frequency lysogenization protein HflD homolog (203 aa).

The protein belongs to the HflD family.

It is found in the cytoplasm. It localises to the cell inner membrane. The protein is High frequency lysogenization protein HflD homolog of Aeromonas salmonicida (strain A449).